The primary structure comprises 2434 residues: MKRQKLKSWILKLEEIRSFQYLFNSWTELNLVRLFTKIVSHRERLIKLFDSRILSTLLLRDLRGSRSNQSLTIKGVVLLTLPVLIYHVNQKSMIERKKFYSMKLFPIPINYAEPRNETSEEYFESFNKNLLIFPHLFLSFPKGRKIYQSHLRNSKEDAWVLSKRKVCVMPAYNQIDSWGSRWWKNWIIEEILPSWKIPQGSIAKIEMSLKEKDVEHLKGFFEFYIDDLIRKDYDWEYHFDRVFMRNKQDTIDLSSKQQVEILGNNLICYLMSAFCEKMLFEAEGPFKQQKSKSIVESNNIKHFSHLRLSYQEKSEWGPRWWKKNMFQIWNSWGESDQIIAESSILLKEKGYLSFQNYAEFWQFYKDSFVSWEKDQQKLELSKDILKEKFIQLNDVNNDQLFSKIQNLLLDILYNFSESIFIKVNHSSQLKRSYNRSIDHFDPISENSEYGTNMNKKDEIISENQRPITWETHSERDEKDIDSEIDLTLNFTENEYWEPEKDLCERIFTNGYINKTEIEQLKERSILWDPSSSIRIERTKIKSDLSSKCLSEDSPIYWTKELFTEDKKSITENLFPKERKRFIENFTKSIRSYFFDILSIDEPCMGSSVTKKPIENFKLLKGQQDVFFRYFRGSEKNGIIDPWKIRTYFQNPSSNCAISLDPGCNMIRKNQRDINKLNCILFMNRSLSRNRFSSFCDQNKEQYIFHNNLRFKKRVLKITDQFALLITKPNQVYDNTLAPDIDYHVNQFYELNKNRFLDQIFNHKNKLKNQSLLILLNITDKENEYLDRIIEKELIQISSKKGSEIGTPLNNYRTETSNWYKLIRYKIHGHLKNAFNKLYSMNGSSRNLKDQIRTNWIENENLNNVSKDTINRHPSNWRKGQKEWFDHSILRTDKCINRNLNVYKWSNQTEYLKRCSKHLVSKQNDLKIVFDPIESCANRDSIGWSGSPNKKDYSKFSLIAENTVKIFLSKKSISHSAIFIPEFFIDKLKGMNDQLFNKLLKSIGVRIVHLKTFKPFLLDNHNLSQRSKFLIDERTVAQFFYHEMPVNRFIIDLFENEKNCMELFDNTDFSTISNDRDNWLNPVKLSNQSSSRASFYKANTLQFFDYSHHPRFNYKKRLPYYMERIHTKNHNLTYGQLFNISPIHSNLFSLSISEIRPVHLEKDTISLIKSQVSNIFLPKYLQQSGNQTFVSIYDLYKSFDLLTRLNPFVHDKIDISSIEEISTTPLTRERIANFEKTSCQPFLNRSDLEENNFDQYLKGGFSSNMGLIQTQSYRDDLLSEIFLKRKDKNQEMLHRIRDRFVKSSSTEGSKNRIENKAIDKRSTLFNFSKEERNLLPFCSPRLNERAKKQEMHRISQIESLFKKWDLFRAYTPWLLTSAWWKYLENLLLETFPEILLNSSDQLVSILHDIMHKSNLSWAISHQLWALLQCNLRTNILDKFFSLWNLCSFKEMINQKNESSVLSIWAHLRLLNAREYEYSILILFFVLGYFVLRYSFVVSSAFIELQIHLERIKDLMDPSYAIELQKLMDHPLPGLLFSMDIRDISIYFLDELIYSMRNRKFYSPIRRELNRSCFSMDISGKERELLVQFLITEKNISQFGSNLTHSHNFFKNEFDYQITEQPGLIYLIYLADTYQKDLMNHEFDQSRLTERWVFLAFCRKITSSQIFRGLNLTFYGKPFSLHLGSSLSKGILLIGPTETGRSYLVKGLAADSYVPLVRISLNKFLYDKGEYSNFLDIRSMNNVVQKMHQFNLTFELAKRMSPCIIWIPNIHELNVNYLTHFFLGLLVNHLSRDDEKDSTRNLLVIASTHIPKKVDPAPIAPNRLDRSINVRMLPIPQRQKEFPILLRSKGFDSEKELSCPKEFGSRTIGSNARDLAALANEALSISITQNKSVIGTDTIRLALYRQTWGLQSIDNQVGSGQNYEILPYKVGKAVIQNTLRRNSSMNPLSINNELWKKRFSYLSKWYLEPSIAGTTMKELTILPHILGCLAGSAARDSWFISGQNRENWIPLDRFAEHDFDLASGLLESLLVEFPWLGICRGKPDKNQITFAPQPKTRNHLNVMRKGVYSMVNKMFIYKEYELKFQQETPGAKQMDEKLVNNIVWAPRIWRLSFLRSNLFDRTKRPNELGFSYQFGLFQEEQASYCKRVRENLESLQKGPHKKGFYVHERNHSNARQKNLQHIQSQLEDISLQERFEIGIFQFSIQYQMRSKSSNKPMFFLGRRFLWDPTGFLFQDQHLVFSRREFFANEEMLRRLYITYGSIRRQEKHLFPKKSIQGAFHRYNSKFMTNSVINSWKQLPLAEKEHIEAFKRIQAIGIRLKRIQPYTPTFLYQRWLIENPQEKVDRFELLIHRQRWLETNSSLSNESFLYNTLSESYKYLSNLFLSNRMLLNQMTRTLLKNRWLFPKEIEHLIHTTKDRFHISILAGKNLSSSMKGQ.

1693 to 1700 is a binding site for ATP; the sequence is GPTETGRS.

This sequence belongs to the Ycf2 family.

It is found in the plastid. The protein localises to the chloroplast stroma. Its function is as follows. Probable ATPase of unknown function. Its presence in a non-photosynthetic plant (Epifagus virginiana) and experiments in tobacco indicate that it has an essential function which is probably not related to photosynthesis. In Cycas taitungensis (Prince sago), this protein is Protein Ycf2.